Consider the following 609-residue polypeptide: UvrABC system protein C (609 aa).

Residues 19-97 form the GIY-YIG domain; that stretch reads ISPGCYLWKS…IKKHNPRFNV (79 aa). Residues 208–243 form the UVR domain; that stretch reads ESLVGDLSIKMSASSNRMDFEKAARYRDMLQRIQNF.

The protein belongs to the UvrC family. Interacts with UvrB in an incision complex.

The protein resides in the cytoplasm. In terms of biological role, the UvrABC repair system catalyzes the recognition and processing of DNA lesions. UvrC both incises the 5' and 3' sides of the lesion. The N-terminal half is responsible for the 3' incision and the C-terminal half is responsible for the 5' incision. The sequence is that of UvrABC system protein C from Leptospira borgpetersenii serovar Hardjo-bovis (strain JB197).